A 463-amino-acid chain; its full sequence is Glucagon-like peptide 1 receptor (463 aa).

A signal peptide spans 1-21 (MAVTPSLLRLALLLLGAVGRA). Residues 22-139 (GPRPQGATVS…KQGERNSPEE (118 aa)) lie on the Extracellular side of the membrane. 3 cysteine pairs are disulfide-bonded: C46/C71, C62/C104, and C85/C126. 3 N-linked (GlcNAc...) asparagine glycosylation sites follow: N63, N82, and N115. The chain crosses the membrane as a helical span at residues 140-164 (QLLSLYIIYTVGYALSFSALVIASA). At 165–175 (ILVSFRHLHCT) the chain is on the cytoplasmic side. The helical transmembrane segment at 176–201 (RNYIHLNLFASFILRALSVFIKDAAL) threads the bilayer. Residues 202–227 (KWMYSTAAQQHQWDGLLSYQDSLGCR) are Extracellular-facing. C226 and C296 are oxidised to a cystine. Residues 228-251 (LVFLLMQYCVAANYYWLLVEGVYL) traverse the membrane as a helical segment. The Cytoplasmic segment spans residues 252-265 (YTLLAFSVFSEQRI). Residues 266-290 (FKLYLSIGWGVPLLFVIPWGIVKYL) form a helical membrane-spanning segment. Over 291–305 (YEDEGCWTRNSNMNY) the chain is Extracellular. The helical transmembrane segment at 306 to 328 (WLIIRLPILFAIGVNFLVFIRVI) threads the bilayer. At 329–348 (CIVIAKLKANLMCKTDIKCR) the chain is on the cytoplasmic side. C341 bears the ADP-ribosylcysteine mark. R348 bears the ADP-ribosylarginine mark. A helical transmembrane segment spans residues 349-370 (LAKSTLTLIPLLGTHEVIFAFV). Positions 352-355 (STLT) are important for allosteric inhibitor binding. Topologically, residues 371–383 (MDEHARGTLRFVK) are extracellular. The chain crosses the membrane as a helical span at residues 384–404 (LFTELSFTSFQGFMVAVLYCF). Residues 405–463 (VNNEVQMEFRKSWERWRLERLNIQRDSSMKPLKCPTSSVSSGATVGSSVYAATCQNSCS) are Cytoplasmic-facing.

The protein belongs to the G-protein coupled receptor 2 family. In terms of assembly, may form homodimers and heterodimers with GIPR. N-glycosylation enhances cell surface expression and lengthens receptor half-life by preventing degradation in the ER. In terms of tissue distribution, pancreatic islets, stomach, lung, rat insulinoma cell line.

It localises to the cell membrane. In terms of biological role, G-protein coupled receptor for glucagon-like peptide 1 (GLP-1). Ligand binding triggers activation of a signaling cascade that leads to the activation of adenylyl cyclase and increased intracellular cAMP levels. Plays a role in regulating insulin secretion in response to GLP-1. The protein is Glucagon-like peptide 1 receptor (Glp1r) of Rattus norvegicus (Rat).